Here is a 239-residue protein sequence, read N- to C-terminus: Ribulose-1,5-bisphosphate 5-phosphatase (239 aa).

Asp8 functions as the Nucleophile in the catalytic mechanism. Mg(2+)-binding residues include Asp8, Asp10, and Asp184. Asp10 functions as the Proton donor in the catalytic mechanism. The disordered stretch occupies residues Pro205–Ser239. Basic and acidic residues predominate over residues Ser214–Ile228.

It belongs to the HAD-like hydrolase superfamily. Mg(2+) is required as a cofactor. Mn(2+) serves as cofactor. The cofactor is Co(2+). Requires Ni(2+) as cofactor.

The enzyme catalyses D-ribulose 1,5-bisphosphate + H2O = D-ribulose 1-phosphate + phosphate. With respect to regulation, requires both monovalent and divalent ions for optimal activity. Optimal KCl concentration is higher than 2.5 M. Phosphatase involved in the non-carboxylating pentose bisphosphate pathway, a nucleoside degradation pathway present in some halophilic archaea. Catalyzes the dephosphorylation of ribulose 1,5-bisphosphate (RuBP) to ribulose 1-phosphate (Ru1P). Shows a strict substrate specificity toward RuBP. This chain is Ribulose-1,5-bisphosphate 5-phosphatase, found in Halopiger xanaduensis (strain DSM 18323 / JCM 14033 / SH-6).